The sequence spans 314 residues: tRNA dimethylallyltransferase (314 aa).

12 to 19 is a binding site for ATP; that stretch reads GPTAGGKS. 14–19 provides a ligand contact to substrate; that stretch reads TAGGKS. An interaction with substrate tRNA region spans residues 37 to 40; it reads DSMQ.

This sequence belongs to the IPP transferase family. Monomer. Mg(2+) is required as a cofactor.

It catalyses the reaction adenosine(37) in tRNA + dimethylallyl diphosphate = N(6)-dimethylallyladenosine(37) in tRNA + diphosphate. Its function is as follows. Catalyzes the transfer of a dimethylallyl group onto the adenine at position 37 in tRNAs that read codons beginning with uridine, leading to the formation of N6-(dimethylallyl)adenosine (i(6)A). In Rhodospirillum centenum (strain ATCC 51521 / SW), this protein is tRNA dimethylallyltransferase.